A 151-amino-acid polypeptide reads, in one-letter code: Putative truncated GMC-type inactive oxidoreductase L893 (151 aa).

The protein belongs to the GMC oxidoreductase family.

The protein resides in the virion. The polypeptide is Putative truncated GMC-type inactive oxidoreductase L893 (Acanthamoeba polyphaga (Amoeba)).